The chain runs to 340 residues: Glutaminyl-peptide cyclotransferase (340 aa).

An N-terminal signal peptide occupies residues 1 to 23 (MAIGSVVFAAAGLLLLLLPPSHQ). N-linked (GlcNAc...) asparagine glycosylation occurs at N42. Alpha-D-mannopyranose contacts are provided by R85 and E91. A disulfide bond links C113 and C136. D131 lines the Zn(2+) pocket. Residues Q151 and R155 each coordinate alpha-D-mannopyranose. N-linked (GlcNAc...) asparagine glycosylation occurs at N156. E170 acts as the Proton acceptor in catalysis. E171 contributes to the Zn(2+) binding site. D218 functions as the Proton acceptor in the catalytic mechanism. H297 lines the Zn(2+) pocket. L306 serves as a coordination point for alpha-D-mannopyranose.

It belongs to the glutaminyl-peptide cyclotransferase family.

The protein resides in the secreted. It catalyses the reaction N-terminal L-glutaminyl-[peptide] = N-terminal 5-oxo-L-prolyl-[peptide] + NH4(+). Its activity is regulated as follows. Inhibited by imidazoles (imidazole, benzimidazole, 1-benzylimidazole, 1-methylimidazole, P150/03, N-omega-acetylhistamine and 4-methylimidazole) and cysteamines (cysteamine, N-dimethylcysteamine and N-diethylcysteamine). Partially inhibited by PDB50 1(3,4-dimethoxyphenyl)-3-(3-imidazol-1-ylpropyl)thiourea. Functionally, acts as a glutaminyl-peptide cyclotransferase. Responsible for the biosynthesis of pyroglutamyl peptides. Might be more efficient in the conversion of tri and tetrapeptides in vitro. Might have a relative preference for substrates containing hydrophobic amino acids in vitro. This chain is Glutaminyl-peptide cyclotransferase, found in Drosophila melanogaster (Fruit fly).